A 28-amino-acid chain; its full sequence is Vasoactive intestinal peptide (28 aa).

Asparagine amide is present on Asn-28.

The protein belongs to the glucagon family.

Its subcellular location is the secreted. Its function is as follows. VIP is a neuropeptide involved in a diverse array of physiological processes through activating the PACAP subfamily of class B1 G protein-coupled receptors: VIP receptor 1 (VPR1) and VIP receptor 2 (VPR2). Abundantly expressed throughout the CNS and peripheral nervous systems where they primarily exert neuroprotective and immune modulatory roles. Also causes vasodilation, lowers arterial blood pressure, stimulates myocardial contractility, increases glycogenolysis and relaxes the smooth muscle of trachea, stomach and gall bladder. This Canis lupus familiaris (Dog) protein is Vasoactive intestinal peptide (VIP).